Reading from the N-terminus, the 269-residue chain is Formamidopyrimidine-DNA glycosylase (269 aa).

Proline 2 acts as the Schiff-base intermediate with DNA in catalysis. Glutamate 3 acts as the Proton donor in catalysis. The active-site Proton donor; for beta-elimination activity is lysine 57. DNA-binding residues include histidine 90, arginine 109, and arginine 150. An FPG-type zinc finger spans residues 235-269 (QVYGRAGEACLTCGTTIKRSKHGQRTTFYCPHCQR). Arginine 259 (proton donor; for delta-elimination activity) is an active-site residue.

Belongs to the FPG family. Monomer. Zn(2+) serves as cofactor.

It catalyses the reaction Hydrolysis of DNA containing ring-opened 7-methylguanine residues, releasing 2,6-diamino-4-hydroxy-5-(N-methyl)formamidopyrimidine.. The enzyme catalyses 2'-deoxyribonucleotide-(2'-deoxyribose 5'-phosphate)-2'-deoxyribonucleotide-DNA = a 3'-end 2'-deoxyribonucleotide-(2,3-dehydro-2,3-deoxyribose 5'-phosphate)-DNA + a 5'-end 5'-phospho-2'-deoxyribonucleoside-DNA + H(+). Functionally, involved in base excision repair of DNA damaged by oxidation or by mutagenic agents. Acts as a DNA glycosylase that recognizes and removes damaged bases. Has a preference for oxidized purines, such as 7,8-dihydro-8-oxoguanine (8-oxoG). Has AP (apurinic/apyrimidinic) lyase activity and introduces nicks in the DNA strand. Cleaves the DNA backbone by beta-delta elimination to generate a single-strand break at the site of the removed base with both 3'- and 5'-phosphates. The polypeptide is Formamidopyrimidine-DNA glycosylase (Edwardsiella ictaluri (strain 93-146)).